Here is a 140-residue protein sequence, read N- to C-terminus: Nucleoside diphosphate kinase (140 aa).

Positions 11, 59, 87, 93, 104, and 114 each coordinate ATP. Catalysis depends on His-117, which acts as the Pros-phosphohistidine intermediate.

It belongs to the NDK family. In terms of assembly, homotetramer. Requires Mg(2+) as cofactor.

It localises to the cytoplasm. It carries out the reaction a 2'-deoxyribonucleoside 5'-diphosphate + ATP = a 2'-deoxyribonucleoside 5'-triphosphate + ADP. The enzyme catalyses a ribonucleoside 5'-diphosphate + ATP = a ribonucleoside 5'-triphosphate + ADP. Major role in the synthesis of nucleoside triphosphates other than ATP. The ATP gamma phosphate is transferred to the NDP beta phosphate via a ping-pong mechanism, using a phosphorylated active-site intermediate. The sequence is that of Nucleoside diphosphate kinase from Persephonella marina (strain DSM 14350 / EX-H1).